A 100-amino-acid polypeptide reads, in one-letter code: Signal recognition particle 19 kDa protein (100 aa).

It belongs to the SRP19 family. In terms of assembly, part of the signal recognition particle protein translocation system, which is composed of SRP and FtsY. Archaeal SRP consists of a 7S RNA molecule of 300 nucleotides and two protein subunits: SRP54 and SRP19.

Its subcellular location is the cytoplasm. Involved in targeting and insertion of nascent membrane proteins into the cytoplasmic membrane. Binds directly to 7S RNA and mediates binding of the 54 kDa subunit of the SRP. This Caldivirga maquilingensis (strain ATCC 700844 / DSM 13496 / JCM 10307 / IC-167) protein is Signal recognition particle 19 kDa protein.